The following is a 93-amino-acid chain: UPF0358 protein lmo1070 (93 aa).

The protein belongs to the UPF0358 family.

This chain is UPF0358 protein lmo1070, found in Listeria monocytogenes serovar 1/2a (strain ATCC BAA-679 / EGD-e).